A 107-amino-acid polypeptide reads, in one-letter code: Iron-binding protein IscA (107 aa).

Residues C35, C99, and C101 each coordinate Fe cation.

The protein belongs to the HesB/IscA family. As to quaternary structure, homodimer; may form tetramers and higher multimers. Fe cation serves as cofactor.

Is able to transfer iron-sulfur clusters to apo-ferredoxin. Multiple cycles of [2Fe2S] cluster formation and transfer are observed, suggesting that IscA acts catalytically. Recruits intracellular free iron so as to provide iron for the assembly of transient iron-sulfur cluster in IscU in the presence of IscS, L-cysteine and the thioredoxin reductase system TrxA/TrxB. The protein is Iron-binding protein IscA of Salmonella agona (strain SL483).